The chain runs to 32 residues: Calcitonin (32 aa).

Cys-1 and Cys-7 are joined by a disulfide. At Pro-32 the chain carries Proline amide.

Belongs to the calcitonin family.

It localises to the secreted. Functionally, calcitonin is a peptide hormone that causes a rapid but short-lived drop in the level of calcium and phosphate in blood by promoting the incorporation of those ions in the bones. Calcitonin function is mediated by the calcitonin receptor/CALCR and the CALCR-RAMP2 (AMYR2) receptor complex. This chain is Calcitonin (CALCA), found in Bos taurus (Bovine).